The sequence spans 221 residues: Lectin L6 (221 aa).

Tandem repeats lie at residues 1-38, 39-75, 76-113, 114-150, 151-188, and 189-221. Positions 1 to 221 are 6 X approximate tandem repeats; the sequence is VQWHQIPGKL…NSVDNIYRSG (221 aa). A disulfide bond links cysteine 32 and cysteine 36. Cysteine 108 and cysteine 112 are oxidised to a cystine. A disulfide bridge connects residues cysteine 183 and cysteine 187.

It belongs to the tectonin family. As to expression, hemocytes.

It localises to the cytoplasmic vesicle. The protein localises to the secretory vesicle. Lipopolysaccharide-binding protein with Gram-negative antibacterial activity. Binds zinc and calcium. The polypeptide is Lectin L6 (Tachypleus tridentatus (Japanese horseshoe crab)).